The chain runs to 440 residues: MSGFGGVKNVVVVGLGMTGLSVVKHLLRQPEALTIKVIDTRDTPPGHDQLPENVELHSGGWQQDWLINADLIVTNPGIALASPQLKPAIDKGIQIVGDIELFAWAVNAPVIAITGSNGKSTVTDLTGEMAKAAGVKTAVGGNIGFAALDLLEQDAELYVLELSSFQLETTSTLKLKAAAFLNLSEDHMDRYQGMADYRQAKLRIFDHAEVCIVNRDDKQTYPDVEKTLKSFGFDQGDYGCIEKDGIEYLAKDAMSLLAANELGLVGKHNIANSLVAIALLDAVGINLDATLDTLRTYNGLTHRCQVVADNNGIRWVNDSKATNVASTLAALSGLQLEGKLHLLVGGVGKGADFSELSPALHDLNLMMYCFGEDGDQFVSLDPRSLLCETMDEAVATLYPTLNKGDMVMLSPACASFDQYANFMARGDAFTQLAKQYSIES.

An ATP-binding site is contributed by 115-121; sequence GSNGKST.

Belongs to the MurCDEF family.

The protein localises to the cytoplasm. It carries out the reaction UDP-N-acetyl-alpha-D-muramoyl-L-alanine + D-glutamate + ATP = UDP-N-acetyl-alpha-D-muramoyl-L-alanyl-D-glutamate + ADP + phosphate + H(+). The protein operates within cell wall biogenesis; peptidoglycan biosynthesis. In terms of biological role, cell wall formation. Catalyzes the addition of glutamate to the nucleotide precursor UDP-N-acetylmuramoyl-L-alanine (UMA). The polypeptide is UDP-N-acetylmuramoylalanine--D-glutamate ligase (Aliivibrio fischeri (strain MJ11) (Vibrio fischeri)).